Reading from the N-terminus, the 493-residue chain is Transmembrane and coiled-coil domain-containing protein 6 (493 aa).

The stretch at 15–84 forms a coiled coil; that stretch reads GVEELRRRRR…QRGTEEKERE (70 aa). The next 2 membrane-spanning stretches (helical) occupy residues 338–358 and 386–406; these read VVAALFILLQFFFQKQPSLLP and PLLQLLPVSNVVSVMVLTVLC.

Its subcellular location is the membrane. This Homo sapiens (Human) protein is Transmembrane and coiled-coil domain-containing protein 6 (TMCO6).